We begin with the raw amino-acid sequence, 301 residues long: Runt-related transcription factor rnt-1 (301 aa).

The region spanning 10–138 (NFIEQQPAPA…TVDGPRDARI (129 aa)) is the Runt domain. Interaction with DNA stretches follow at residues 40-44 (RSNKS), 95-103 (RFVGRSGRG), and 128-137 (VTVDGPRDAR). Arg99 and Val130 together coordinate chloride. The disordered stretch occupies residues 237-301 (PSIFITPTSD…SSSPTIWRPF (65 aa)). A Phosphoserine modification is found at Ser255. The span at 255-276 (SPRSITKSSETSINLIQETPES) shows a compositional bias: polar residues. Residues 285-301 (VSITSSNSSSPTIWRPF) are compositionally biased toward low complexity.

In terms of assembly, interacts with CBFbeta homolog bro-1; acts to increase the affinity and specificity of interaction of rnt-1 with DNA. Interacts with TGF-beta pathway protein sma-4. May be ubiquitinated in order to be targeted for proteasome-mediated degradation in intestinal cells. In terms of processing, may be phosphorylated by members of the p38 MAP kinase pathway. In terms of tissue distribution, expressed in the intestine.

Its subcellular location is the nucleus. Functionally, transcription factor. Binds to regulatory DNA sequences in order to modulate transcription; negatively autoregulates its own expression, perhaps dependent upon CBF beta homolog bro-1. Promotes proliferation, and prevents differentiation, of seam cells, a stem cell-like lineage, acting in concert with bro-1. Required for controlling cell proliferation in the seam cells, perhaps by repressing expression of cyclin-dependent kinase inhibitor cki-1. Inhibition of seam cell differentiation is regulated by rnt-1 and bro-1, perhaps acting upstream of pop-1, by antagonizing pop-1 repressor function. Required for asymmetrical cell divisions in the lineage derived from a posterior embryonic seam cell, the T blast cell, and for asymmetric expression of zinc finger protein tlp-1. Regulates growth and male tail development. Involved in the oxidative stress response, perhaps downstream of the p38 MAP kinase pathway, and acting as part of a negative feedback loop via a transcriptional target gene, tyrosine-protein phosphatase vhp-1. Positively modulates dopaminergic signaling in a non-cell autonomous manner. May be involved in TGF-beta signaling. This chain is Runt-related transcription factor rnt-1, found in Caenorhabditis elegans.